Reading from the N-terminus, the 449-residue chain is UNC93-like protein MFSD11 (449 aa).

A helical membrane pass occupies residues 8-28 (LFNIVILGVAFMFMFTAFQTC). The N-linked (GlcNAc...) asparagine glycan is linked to Asn-40. Helical transmembrane passes span 53–73 (AIIY…VAIV), 74–94 (GPQI…AVFI), 96–116 (PFPW…AVLW), 138–158 (IFWA…YFAW), and 170–190 (RTVF…FFLI). Position 204 is a phosphoserine (Ser-204). The next 6 helical transmembrane spans lie at 239–259 (MLLL…FSGV), 277–297 (LIGL…SLFG), 309–329 (PVVL…FLNM), 359–379 (FLLG…LGFL), 385–405 (APAF…AFFY), and 410–430 (LLHW…ISFF).

It belongs to the unc-93 family. As to expression, widely expressed.

It is found in the membrane. This chain is UNC93-like protein MFSD11 (Mfsd11), found in Mus musculus (Mouse).